The chain runs to 83 residues: ATP synthase subunit c 2 (83 aa).

2 helical membrane passes run 8 to 28 (IASI…PALG) and 58 to 78 (LAMI…LLFA).

It belongs to the ATPase C chain family. F-type ATPases have 2 components, F(1) - the catalytic core - and F(0) - the membrane proton channel. F(1) has five subunits: alpha(3), beta(3), gamma(1), delta(1), epsilon(1). F(0) has four main subunits: a(1), b(1), b'(1) and c(10-14). The alpha and beta chains form an alternating ring which encloses part of the gamma chain. F(1) is attached to F(0) by a central stalk formed by the gamma and epsilon chains, while a peripheral stalk is formed by the delta, b and b' chains.

Its subcellular location is the cell inner membrane. Its function is as follows. F(1)F(0) ATP synthase produces ATP from ADP in the presence of a proton or sodium gradient. F-type ATPases consist of two structural domains, F(1) containing the extramembraneous catalytic core and F(0) containing the membrane proton channel, linked together by a central stalk and a peripheral stalk. During catalysis, ATP synthesis in the catalytic domain of F(1) is coupled via a rotary mechanism of the central stalk subunits to proton translocation. Functionally, key component of the F(0) channel; it plays a direct role in translocation across the membrane. A homomeric c-ring of between 10-14 subunits forms the central stalk rotor element with the F(1) delta and epsilon subunits. The chain is ATP synthase subunit c 2 from Cereibacter sphaeroides (strain ATCC 17029 / ATH 2.4.9) (Rhodobacter sphaeroides).